Consider the following 316-residue polypeptide: Haloacid dehalogenase-like hydrolase domain-containing protein At4g39970 (316 aa).

The transit peptide at Met1–Tyr46 directs the protein to the chloroplast. Asp69 functions as the Nucleophile in the catalytic mechanism. Positions 69, 71, and 259 each coordinate Mg(2+). The active-site Proton donor is Asp71.

It belongs to the HAD-like hydrolase superfamily. DOG/GPP family. Requires Mg(2+) as cofactor.

It localises to the plastid. The protein resides in the chloroplast. This chain is Haloacid dehalogenase-like hydrolase domain-containing protein At4g39970, found in Arabidopsis thaliana (Mouse-ear cress).